The sequence spans 100 residues: ATP synthase subunit c (100 aa).

2 consecutive transmembrane segments (helical) span residues 30-50 (LLYL…GVGM) and 80-100 (AFIE…LFVV).

This sequence belongs to the ATPase C chain family. As to quaternary structure, F-type ATPases have 2 components, F(1) - the catalytic core - and F(0) - the membrane proton channel. F(1) has five subunits: alpha(3), beta(3), gamma(1), delta(1), epsilon(1). F(0) has three main subunits: a(1), b(2) and c(10-14). The alpha and beta chains form an alternating ring which encloses part of the gamma chain. F(1) is attached to F(0) by a central stalk formed by the gamma and epsilon chains, while a peripheral stalk is formed by the delta and b chains.

The protein localises to the cell inner membrane. Functionally, f(1)F(0) ATP synthase produces ATP from ADP in the presence of a proton or sodium gradient. F-type ATPases consist of two structural domains, F(1) containing the extramembraneous catalytic core and F(0) containing the membrane proton channel, linked together by a central stalk and a peripheral stalk. During catalysis, ATP synthesis in the catalytic domain of F(1) is coupled via a rotary mechanism of the central stalk subunits to proton translocation. In terms of biological role, key component of the F(0) channel; it plays a direct role in translocation across the membrane. A homomeric c-ring of between 10-14 subunits forms the central stalk rotor element with the F(1) delta and epsilon subunits. The chain is ATP synthase subunit c from Aquifex aeolicus (strain VF5).